The primary structure comprises 256 residues: Chlorophyll a-b binding protein CP24 10B, chloroplastic (256 aa).

The transit peptide at 1–45 directs the protein to the chloroplast; that stretch reads MTTTSATAVLNGLSSSFLTGGKKTQALLGAHVTARVTTPKRFVVA. A run of 2 helical transmembrane segments spans residues 106-126 and 134-154; these read WAMA…IPWF and AIAP…MGWV.

This sequence belongs to the ELIP/psbS family.

The protein resides in the plastid. Its subcellular location is the chloroplast thylakoid membrane. In Solanum lycopersicum (Tomato), this protein is Chlorophyll a-b binding protein CP24 10B, chloroplastic (CAP10B).